A 94-amino-acid polypeptide reads, in one-letter code: Large ribosomal subunit protein bL25 (94 aa).

Residues 1–20 (MFKFNAEVRQSQGKGASRRL) form a disordered region.

This sequence belongs to the bacterial ribosomal protein bL25 family. Part of the 50S ribosomal subunit; part of the 5S rRNA/L5/L18/L25 subcomplex. Contacts the 5S rRNA. Binds to the 5S rRNA independently of L5 and L18.

Functionally, this is one of the proteins that binds to the 5S RNA in the ribosome where it forms part of the central protuberance. In Pasteurella multocida (strain Pm70), this protein is Large ribosomal subunit protein bL25.